Consider the following 195-residue polypeptide: Probable molybdenum cofactor guanylyltransferase (195 aa).

GTP is bound by residues 8 to 10 (LSG), Lys-20, Asp-65, and Asp-96. Asp-96 contributes to the Mg(2+) binding site.

It belongs to the MobA family. It depends on Mg(2+) as a cofactor.

The protein localises to the cytoplasm. The enzyme catalyses Mo-molybdopterin + GTP + H(+) = Mo-molybdopterin guanine dinucleotide + diphosphate. Functionally, transfers a GMP moiety from GTP to Mo-molybdopterin (Mo-MPT) cofactor (Moco or molybdenum cofactor) to form Mo-molybdopterin guanine dinucleotide (Mo-MGD) cofactor. The protein is Probable molybdenum cofactor guanylyltransferase of Bacillus licheniformis (strain ATCC 14580 / DSM 13 / JCM 2505 / CCUG 7422 / NBRC 12200 / NCIMB 9375 / NCTC 10341 / NRRL NRS-1264 / Gibson 46).